We begin with the raw amino-acid sequence, 158 residues long: Endoribonuclease YbeY (158 aa).

Zn(2+)-binding residues include histidine 118, histidine 122, and histidine 128.

The protein belongs to the endoribonuclease YbeY family. Requires Zn(2+) as cofactor.

It is found in the cytoplasm. Its function is as follows. Single strand-specific metallo-endoribonuclease involved in late-stage 70S ribosome quality control and in maturation of the 3' terminus of the 16S rRNA. This is Endoribonuclease YbeY from Bartonella henselae (strain ATCC 49882 / DSM 28221 / CCUG 30454 / Houston 1) (Rochalimaea henselae).